Here is a 397-residue protein sequence, read N- to C-terminus: MTSAEPRAYPFNDVHGLTLAGRYGELQETEPVSRVRPPYGEEAWLVTRYEDVRAVLGDGRFVRGPSMTRDEPRTRPEMVKGGLLSMDPPEHSRLRRLVVKAFTARRAESLRPRAREIAHELVDQMAATGQPADLVAMFARQLPVRVICELLGVPSADHDRFTRWSGAFLSTAEVTAEEMQEAAEQAYAYMGDLIDRRRKEPTDDLVSALVQARDQQDSLSEQELLDLAIGLLVAGYESTTTQIADFVYLLMTRPELRRQLLDRPELIPSAVEELTRWVPLGVGTAFPRYAVEDVTLRGVTIRAGEPVLASTGAANRDQAQFPDADRIDVDRTPNQHLGFGHGVHHCLGAPLARVELQVALEVLLQRLPGIRLGIPETQLRWSEGMLLRGPLELPVVW.

The disordered stretch occupies residues 63 to 86; sequence RGPSMTRDEPRTRPEMVKGGLLSM. Residues 68–78 are compositionally biased toward basic and acidic residues; that stretch reads TRDEPRTRPEM. Gly81 lines the substrate pocket. Positions 91, 95, 288, 344, and 346 each coordinate heme.

This sequence belongs to the cytochrome P450 family. Requires heme as cofactor.

It functions in the pathway antibiotic biosynthesis; mycinamicin biosynthesis. Functionally, involved in the biosynthesis of mycinamicin, a 16-membered macrolide antibiotic. Catalyzes consecutive hydroxylation (at C14) and epoxidation (at C12-C13) reactions with mycinamicin IV as initial substrate, leading to mycinamicin II. These reactions require prior dimethylation of 6-deoxyallose to mycinose for effective conversion by the dual function MycG enzyme. The polypeptide is Mycinamicin IV hydroxylase/epoxidase (Micromonospora griseorubida).